A 134-amino-acid chain; its full sequence is ATP synthase epsilon chain (134 aa).

The protein belongs to the ATPase epsilon chain family. F-type ATPases have 2 components, CF(1) - the catalytic core - and CF(0) - the membrane proton channel. CF(1) has five subunits: alpha(3), beta(3), gamma(1), delta(1), epsilon(1). CF(0) has three main subunits: a, b and c. In this bacterium the a and b subunits are transcribed but do not seem to be translated, thus the ATP synthase consists of the alpha, beta, gamma, delta, epsilon and c subunits.

It is found in the cell membrane. In terms of biological role, produces ATP from ADP in the presence of a proton gradient across the membrane. The sequence is that of ATP synthase epsilon chain from Moorella thermoacetica (strain ATCC 39073 / JCM 9320).